Here is a 560-residue protein sequence, read N- to C-terminus: Light-independent protochlorophyllide reductase subunit N (560 aa).

The [4Fe-4S] cluster site is built by Cys-24, Cys-49, and Cys-109. A compositionally biased stretch (low complexity) spans 173-182 (NSLFNQSSNS). A disordered region spans residues 173–210 (NSLFNQSSNSPENLKTLNTKKDTFQNSTENSKTFSAEK). The segment covering 196–206 (FQNSTENSKTF) has biased composition (polar residues).

It belongs to the BchN/ChlN family. As to quaternary structure, protochlorophyllide reductase is composed of three subunits; ChlL, ChlN and ChlB. Forms a heterotetramer of two ChlB and two ChlN subunits. Requires [4Fe-4S] cluster as cofactor.

The protein resides in the plastid. It is found in the chloroplast. It carries out the reaction chlorophyllide a + oxidized 2[4Fe-4S]-[ferredoxin] + 2 ADP + 2 phosphate = protochlorophyllide a + reduced 2[4Fe-4S]-[ferredoxin] + 2 ATP + 2 H2O. The protein operates within porphyrin-containing compound metabolism; chlorophyll biosynthesis (light-independent). Its function is as follows. Component of the dark-operative protochlorophyllide reductase (DPOR) that uses Mg-ATP and reduced ferredoxin to reduce ring D of protochlorophyllide (Pchlide) to form chlorophyllide a (Chlide). This reaction is light-independent. The NB-protein (ChlN-ChlB) is the catalytic component of the complex. This Tetradesmus obliquus (Green alga) protein is Light-independent protochlorophyllide reductase subunit N.